Here is a 290-residue protein sequence, read N- to C-terminus: Serpentine receptor class U-26 (290 aa).

Transmembrane regions (helical) follow at residues 31–51 (LPML…IIIL), 70–90 (LLSA…ADFL), 112–134 (FITI…PFLV), 158–178 (FSIP…FPAI), 185–205 (AYPF…FGLV), 213–233 (NTLF…LLLI), and 262–282 (MIFS…LHIV).

It belongs to the nematode receptor-like protein sru family.

The protein resides in the membrane. This is Serpentine receptor class U-26 (sru-26) from Caenorhabditis elegans.